We begin with the raw amino-acid sequence, 607 residues long: Arginine--tRNA ligase (607 aa).

The 'HIGH' region signature appears at 147-157 (PNIAKEMHVGH).

Belongs to the class-I aminoacyl-tRNA synthetase family. In terms of assembly, monomer.

Its subcellular location is the cytoplasm. It carries out the reaction tRNA(Arg) + L-arginine + ATP = L-arginyl-tRNA(Arg) + AMP + diphosphate. The protein is Arginine--tRNA ligase of Prochlorococcus marinus (strain NATL2A).